Consider the following 267-residue polypeptide: Indole-3-glycerol phosphate synthase (267 aa).

This sequence belongs to the TrpC family.

The catalysed reaction is 1-(2-carboxyphenylamino)-1-deoxy-D-ribulose 5-phosphate + H(+) = (1S,2R)-1-C-(indol-3-yl)glycerol 3-phosphate + CO2 + H2O. It participates in amino-acid biosynthesis; L-tryptophan biosynthesis; L-tryptophan from chorismate: step 4/5. The chain is Indole-3-glycerol phosphate synthase from Delftia acidovorans (strain DSM 14801 / SPH-1).